The sequence spans 663 residues: Tripartite terminase subunit 3 (663 aa).

The short motif at 205 to 212 is the Walker A motif element; that stretch reads VPRRHGKT. Residues 297–302 carry the Walker B motif motif; it reads LLIVDE. Glu-302 acts as the For ATPase activity in catalysis. Active-site for nuclease activity residues include Asp-455, Glu-526, and Asp-640.

Belongs to the herpesviridae TRM3 protein family. Interacts with the terminase subunits TRM1 and TRM2. Interacts with portal protein.

Its subcellular location is the host nucleus. Its function is as follows. Component of the molecular motor that translocates viral genomic DNA in empty capsid during DNA packaging. Forms a tripartite terminase complex together with TRM1 and TRM2 in the host cytoplasm. Once the complex reaches the host nucleus, it interacts with the capsid portal vertex. This portal forms a ring in which genomic DNA is translocated into the capsid. TRM3 carries an RNase H-like nuclease activity that plays an important role for the cleavage of concatemeric viral DNA into unit length genomes. The chain is Tripartite terminase subunit 3 from Human herpesvirus 7 (strain JI) (HHV-7).